Here is a 188-residue protein sequence, read N- to C-terminus: Archaemetzincin (188 aa).

A Zn(2+)-binding site is contributed by histidine 137. The active-site Proton acceptor is the glutamate 138. 6 residues coordinate Zn(2+): histidine 141, histidine 147, cysteine 148, cysteine 153, cysteine 172, and cysteine 175.

The protein belongs to the peptidase M54 family. In terms of assembly, monomer. Zn(2+) is required as a cofactor.

In terms of biological role, probable zinc metalloprotease whose natural substrate is unknown. The polypeptide is Archaemetzincin (Pyrococcus abyssi (strain GE5 / Orsay)).